Here is a 427-residue protein sequence, read N- to C-terminus: Retron Mx65 reverse transcriptase (427 aa).

A Reverse transcriptase domain is found at 136–366 (RHYSIHRPRE…GAQRVTGVTV (231 aa)). Residues aspartate 219, aspartate 315, and aspartate 316 each coordinate Mg(2+).

Belongs to the bacterial reverse transcriptase family.

It catalyses the reaction DNA(n) + a 2'-deoxyribonucleoside 5'-triphosphate = DNA(n+1) + diphosphate. Functionally, reverse transcriptase (RT) responsible for synthesis of msDNA-Mx65 (a branched molecule with RNA linked by a 2',5'-phosphodiester bond to ssDNA). The retron transcript serves as primer (from a conserved internal G residue) and template for the reaction, and codes for the RT. The retron is involved in antiviral defense. This chain is Retron Mx65 reverse transcriptase, found in Myxococcus xanthus.